Reading from the N-terminus, the 314-residue chain is Periplasmic [NiFe] hydrogenase small subunit (314 aa).

A signal peptide (tat-type signal) is located at residues 1-49; it reads MNFSVGLGRDDAEKRLVQNGVSRRDFMKFCATVAAAMGMGPAFAPKVAE. Residues C67, C70, C164, C197, H234, C237, C262, and C268 each contribute to the [4Fe-4S] cluster site. [3Fe-4S] cluster is bound by residues C277, C295, and C298.

It belongs to the [NiFe]/[NiFeSe] hydrogenase small subunit family. Heterodimer of a large and a small subunit. Requires [4Fe-4S] cluster as cofactor. It depends on [3Fe-4S] cluster as a cofactor. Post-translationally, predicted to be exported by the Tat system. The position of the signal peptide cleavage has been experimentally proven.

It is found in the periplasm. The enzyme catalyses 2 Fe(III)-[cytochrome c3] + H2 = 2 Fe(II)-[cytochrome c3] + 2 H(+). Functionally, involved in hydrogen uptake for the anaerobic reduction of sulfate to hydrogen sulfide in an electron transport chain. Cytochrome c3 is the physiological electron acceptor. This is Periplasmic [NiFe] hydrogenase small subunit (hydA) from Solidesulfovibrio fructosivorans (Desulfovibrio fructosivorans).